A 448-amino-acid polypeptide reads, in one-letter code: Nucleoprotein (448 aa).

Residues 1–55 form a disordered region; it reads MSFTPGKQSSSRASSGNRSGNGILKWADQSDQVRNVQTRGRRAQPKQTATSQQPS. The span at 9 to 22 shows a compositional bias: low complexity; it reads SSSRASSGNRSGNG. Polar residues-rich tracts occupy residues 29–38 and 45–55; these read QSDQVRNVQT and PKQTATSQQPS. An RNA-binding region spans residues 52–194; it reads QQPSGGNVVP…GYYIEGSGRS (143 aa). The region spanning 61–190 is the CoV N NTD domain; it reads PYYSWFSGIT…VLPQGYYIEG (130 aa). RNA contacts are provided by Arg106, Arg122, and Arg164. 3 disordered regions span residues 158–231, 266–293, and 385–448; these read PADI…VTPD, ILNKPRQKRSPNKQCTVQQCFGKRGPNQ, and GMMN…TSEI. A Phosphoserine; by host modification is found at Ser167. Phosphothreonine; by host is present on Thr174. The residue at position 191 (Ser191) is a Phosphoserine; by host. Low complexity predominate over residues 193-223; that stretch reads RSAPNSRSTSRTSSRASSAGSRSRANSGNRT. Residues 259–384 enclose the CoV N CTD domain; it reads AKEVRQKILN…ENLNAYQQQD (126 aa). The span at 266-276 shows a compositional bias: basic residues; the sequence is ILNKPRQKRSP. The dimerization stretch occupies residues 266–384; it reads ILNKPRQKRS…ENLNAYQQQD (119 aa). Residues Ser390 and Ser423 each carry the phosphoserine; by host modification. The span at 422–439 shows a compositional bias: basic and acidic residues; it reads KSRELTAEDISLLKKMDE. Thr427 carries the post-translational modification Phosphothreonine; by host.

It belongs to the betacoronavirus nucleocapsid protein family. As to quaternary structure, homooligomer. Both monomeric and oligomeric forms interact with RNA. Interacts with protein M. Interacts with NSP3; this interaction serves to tether the genome to the newly translated replicase-transcriptase complex at a very early stage of infection. ADP-ribosylated. The ADP-ribosylation is retained in the virion during infection. Post-translationally, phosphorylated on serine and threonine residues. In terms of processing, proteolytically cleaved by host CASP6. The cleavage leads to two fragments and facilitates viral replication by inhibiting host IFN signaling. The two fragments may interact with IRF3 inhibiting its nuclear translocation after activation and reduce the expression of IFNB and IFN-stimulated genes.

The protein resides in the virion. It is found in the host endoplasmic reticulum-Golgi intermediate compartment. Its subcellular location is the host Golgi apparatus. Functionally, packages the positive strand viral genome RNA into a helical ribonucleocapsid (RNP) and plays a fundamental role during virion assembly through its interactions with the viral genome and membrane protein M. Plays an important role in enhancing the efficiency of subgenomic viral RNA transcription as well as viral replication. Attenuates the stress granules formation by reducing host G3BP1 access to host mRNAs under stress conditions. This is Nucleoprotein from Homo sapiens (Human).